Here is a 67-residue protein sequence, read N- to C-terminus: Putative sodium channel alpha-toxin Acra5 (67 aa).

Positions 2–65 constitute an LCN-type CS-alpha/beta domain; that stretch reads RDGYIMIKDT…VYGDRGVICR (64 aa). 4 cysteine pairs are disulfide-bonded: Cys13–Cys64, Cys17–Cys40, Cys26–Cys45, and Cys30–Cys47. A propeptide (removed by a carboxypeptidase) is located at residue Arg67.

The protein belongs to the long (4 C-C) scorpion toxin superfamily. Sodium channel inhibitor family. Alpha subfamily. As to expression, expressed by the venom gland.

Its subcellular location is the secreted. Functionally, alpha toxins bind voltage-independently at site-3 of sodium channels (Nav) and inhibit the inactivation of the activated channels, thereby blocking neuronal transmission. The chain is Putative sodium channel alpha-toxin Acra5 from Androctonus crassicauda (Arabian fat-tailed scorpion).